The primary structure comprises 102 residues: Protein AC4 (102 aa).

It belongs to the geminiviridae protein AC4/C4 family.

Functionally, pathogenicity determinant. May act as a suppressor of RNA-mediated gene silencing, also known as post-transcriptional gene silencing (PTGS), a mechanism of plant viral defense that limits the accumulation of viral RNAs. This is Protein AC4 from Indian cassava mosaic virus (ICMV).